The chain runs to 213 residues: Nucleoside triphosphate pyrophosphatase (213 aa).

The active-site Proton acceptor is the Asp-79.

Belongs to the Maf family. Requires a divalent metal cation as cofactor.

The protein resides in the cytoplasm. The catalysed reaction is a ribonucleoside 5'-triphosphate + H2O = a ribonucleoside 5'-phosphate + diphosphate + H(+). It catalyses the reaction a 2'-deoxyribonucleoside 5'-triphosphate + H2O = a 2'-deoxyribonucleoside 5'-phosphate + diphosphate + H(+). In terms of biological role, nucleoside triphosphate pyrophosphatase. May have a dual role in cell division arrest and in preventing the incorporation of modified nucleotides into cellular nucleic acids. The protein is Nucleoside triphosphate pyrophosphatase of Mycobacterium leprae (strain Br4923).